A 368-amino-acid polypeptide reads, in one-letter code: Alanine racemase (368 aa).

The active-site Proton acceptor; specific for D-alanine is Lys40. At Lys40 the chain carries N6-(pyridoxal phosphate)lysine. Arg136 provides a ligand contact to substrate. The Proton acceptor; specific for L-alanine role is filled by Tyr263. Met310 is a binding site for substrate.

Belongs to the alanine racemase family. It depends on pyridoxal 5'-phosphate as a cofactor.

The enzyme catalyses L-alanine = D-alanine. The protein operates within amino-acid biosynthesis; D-alanine biosynthesis; D-alanine from L-alanine: step 1/1. Its function is as follows. Catalyzes the interconversion of L-alanine and D-alanine. May also act on other amino acids. The protein is Alanine racemase (alr) of Streptococcus uberis (strain ATCC BAA-854 / 0140J).